Consider the following 365-residue polypeptide: tRNA/tmRNA (uracil-C(5))-methyltransferase (365 aa).

S-adenosyl-L-methionine is bound by residues glutamine 189, tyrosine 217, asparagine 222, glutamate 238, and aspartate 298. Cysteine 323 serves as the catalytic Nucleophile. Glutamate 357 serves as the catalytic Proton acceptor.

The protein belongs to the class I-like SAM-binding methyltransferase superfamily. RNA M5U methyltransferase family. TrmA subfamily.

The enzyme catalyses uridine(54) in tRNA + S-adenosyl-L-methionine = 5-methyluridine(54) in tRNA + S-adenosyl-L-homocysteine + H(+). The catalysed reaction is uridine(341) in tmRNA + S-adenosyl-L-methionine = 5-methyluridine(341) in tmRNA + S-adenosyl-L-homocysteine + H(+). In terms of biological role, dual-specificity methyltransferase that catalyzes the formation of 5-methyluridine at position 54 (m5U54) in all tRNAs, and that of position 341 (m5U341) in tmRNA (transfer-mRNA). The polypeptide is tRNA/tmRNA (uracil-C(5))-methyltransferase (Shewanella loihica (strain ATCC BAA-1088 / PV-4)).